The chain runs to 155 residues: Endoribonuclease YbeY (155 aa).

Residues His-114, His-118, and His-124 each coordinate Zn(2+).

Belongs to the endoribonuclease YbeY family. Requires Zn(2+) as cofactor.

It is found in the cytoplasm. In terms of biological role, single strand-specific metallo-endoribonuclease involved in late-stage 70S ribosome quality control and in maturation of the 3' terminus of the 16S rRNA. The chain is Endoribonuclease YbeY from Escherichia coli O157:H7.